Consider the following 323-residue polypeptide: tRNA dimethylallyltransferase (323 aa).

Gly-12–Thr-19 contributes to the ATP binding site. Thr-14–Thr-19 is a binding site for substrate. Interaction with substrate tRNA stretches follow at residues Asp-37–Leu-40 and Gln-161–Arg-165.

It belongs to the IPP transferase family. As to quaternary structure, monomer. Requires Mg(2+) as cofactor.

The catalysed reaction is adenosine(37) in tRNA + dimethylallyl diphosphate = N(6)-dimethylallyladenosine(37) in tRNA + diphosphate. Its function is as follows. Catalyzes the transfer of a dimethylallyl group onto the adenine at position 37 in tRNAs that read codons beginning with uridine, leading to the formation of N6-(dimethylallyl)adenosine (i(6)A). This Pseudomonas fluorescens (strain SBW25) protein is tRNA dimethylallyltransferase.